Here is a 621-residue protein sequence, read N- to C-terminus: DNA mismatch repair protein MutL (621 aa).

The protein belongs to the DNA mismatch repair MutL/HexB family.

Functionally, this protein is involved in the repair of mismatches in DNA. It is required for dam-dependent methyl-directed DNA mismatch repair. May act as a 'molecular matchmaker', a protein that promotes the formation of a stable complex between two or more DNA-binding proteins in an ATP-dependent manner without itself being part of a final effector complex. This is DNA mismatch repair protein MutL from Xylella fastidiosa (strain M12).